The primary structure comprises 182 residues: Putative pre-16S rRNA nuclease (182 aa).

The protein belongs to the YqgF nuclease family.

It is found in the cytoplasm. In terms of biological role, could be a nuclease involved in processing of the 5'-end of pre-16S rRNA. This chain is Putative pre-16S rRNA nuclease, found in Corynebacterium aurimucosum (strain ATCC 700975 / DSM 44827 / CIP 107346 / CN-1) (Corynebacterium nigricans).